A 299-amino-acid chain; its full sequence is tRNA dimethylallyltransferase (299 aa).

13-20 contacts ATP; that stretch reads GPTASGKT. 15–20 is a substrate binding site; that stretch reads TASGKT. The interaction with substrate tRNA stretch occupies residues 38–41; sequence DSRQ.

The protein belongs to the IPP transferase family. In terms of assembly, monomer. It depends on Mg(2+) as a cofactor.

It catalyses the reaction adenosine(37) in tRNA + dimethylallyl diphosphate = N(6)-dimethylallyladenosine(37) in tRNA + diphosphate. In terms of biological role, catalyzes the transfer of a dimethylallyl group onto the adenine at position 37 in tRNAs that read codons beginning with uridine, leading to the formation of N6-(dimethylallyl)adenosine (i(6)A). The protein is tRNA dimethylallyltransferase of Prochlorococcus marinus (strain MIT 9301).